Reading from the N-terminus, the 81-residue chain is Large ribosomal subunit protein bL31B (81 aa).

It belongs to the bacterial ribosomal protein bL31 family. Type B subfamily. As to quaternary structure, part of the 50S ribosomal subunit.

In Lactobacillus acidophilus (strain ATCC 700396 / NCK56 / N2 / NCFM), this protein is Large ribosomal subunit protein bL31B.